Consider the following 229-residue polypeptide: Somatolactin (229 aa).

Positions 1-24 (MHLVSVIQRGVWAVLLWPNLLASS) are cleaved as a signal peptide. Disulfide bonds link Cys-29/Cys-39, Cys-87/Cys-203, and Cys-220/Cys-228. 2 N-linked (GlcNAc...) asparagine glycosylation sites follow: Asn-143 and Asn-175.

The protein belongs to the somatotropin/prolactin family.

The protein localises to the secreted. This is Somatolactin from Cyclopterus lumpus (Lumpsucker).